Reading from the N-terminus, the 447-residue chain is N-succinylarginine dihydrolase (447 aa).

Substrate contacts are provided by residues 19–28 (AGLSFGNEAS), N110, and 137–138 (HR). Residue E174 is part of the active site. Position 213 (R213) interacts with substrate. H249 is an active-site residue. Substrate-binding residues include D251 and N364. C370 serves as the catalytic Nucleophile.

Belongs to the succinylarginine dihydrolase family. Homodimer.

It carries out the reaction N(2)-succinyl-L-arginine + 2 H2O + 2 H(+) = N(2)-succinyl-L-ornithine + 2 NH4(+) + CO2. It participates in amino-acid degradation; L-arginine degradation via AST pathway; L-glutamate and succinate from L-arginine: step 2/5. Its function is as follows. Catalyzes the hydrolysis of N(2)-succinylarginine into N(2)-succinylornithine, ammonia and CO(2). This chain is N-succinylarginine dihydrolase, found in Yersinia enterocolitica serotype O:8 / biotype 1B (strain NCTC 13174 / 8081).